The following is a 131-amino-acid chain: Cystatin-like cysteine protease inhibitor EPIC3 (131 aa).

A signal peptide spans methionine 1 to alanine 20. Asparagine 33 carries N-linked (GlcNAc...) asparagine glycosylation. Residues glutamine 71–glycine 75 carry the Secondary area of contact motif.

This sequence belongs to the cystatin family.

It is found in the secreted. Its function is as follows. Secreted effector that interacts with and inhibits host apoplastic pathogenesis-related papain-like cysteine proteases. Inhibition of host proteases by a pathogen extracellular protease inhibitor forms a specific type of defense-counterdefense mechanism between plants and microbial pathogens. In Phytophthora infestans (Potato late blight agent), this protein is Cystatin-like cysteine protease inhibitor EPIC3.